The sequence spans 394 residues: uncharacterized protein (394 aa).

The F-box domain occupies 7–51 (RKVIPNMPDLILRKIFDQYDYPVLCKMERVCRRWTNIINSKFRKE).

This is an uncharacterized protein from Caenorhabditis elegans.